Here is an 85-residue protein sequence, read N- to C-terminus: Putative septation protein SpoVG (85 aa).

The protein belongs to the SpoVG family.

Its function is as follows. Could be involved in septation. This chain is Putative septation protein SpoVG, found in Archaeoglobus fulgidus (strain ATCC 49558 / DSM 4304 / JCM 9628 / NBRC 100126 / VC-16).